The following is a 251-amino-acid chain: Triosephosphate isomerase, glycosomal (251 aa).

Residues Asn12 and Lys14 each coordinate substrate. His96 functions as the Electrophile in the catalytic mechanism. Glu168 (proton acceptor) is an active-site residue.

This sequence belongs to the triosephosphate isomerase family. As to quaternary structure, homodimer.

It is found in the glycosome. It catalyses the reaction D-glyceraldehyde 3-phosphate = dihydroxyacetone phosphate. It participates in carbohydrate biosynthesis; gluconeogenesis. It functions in the pathway carbohydrate degradation; glycolysis; D-glyceraldehyde 3-phosphate from glycerone phosphate: step 1/1. The polypeptide is Triosephosphate isomerase, glycosomal (Trypanosoma cruzi).